A 299-amino-acid polypeptide reads, in one-letter code: MLFDQIASNKRKTWILLLVFFLLLALVGYAVGYLFIRSGLGGLVIALIIGFIYALSMIFQSTEIVMSMNGAREVDEQTAPDLYHVVEDMALVAQIPMPRVFIIDDPALNAFATGSNPQNAAVAATSGLLAIMNREELEAVMGHEVSHIRNYDIRISTIAVALASAITMLSSMAGRMMWWGGAGRRRSDDDRDGNGLEIIMLVVSLLAIVLAPLAATLVQLAISRQREFLADASSVELTRNPQGMINALDKLDNSKPMSRHVDDASSALYINDPKKGGGFQKLFYTHPPISERIERLKHM.

The next 2 membrane-spanning stretches (helical) occupy residues 15 to 35 and 39 to 59; these read ILLLVFFLLLALVGYAVGYLF and GLGGLVIALIIGFIYALSMIF. H143 contributes to the Zn(2+) binding site. E144 is an active-site residue. A Zn(2+)-binding site is contributed by H147. 2 consecutive transmembrane segments (helical) span residues 158–178 and 198–218; these read IAVALASAITMLSSMAGRMMW and IIMLVVSLLAIVLAPLAATLV. Residue E227 coordinates Zn(2+).

Belongs to the peptidase M48B family. Zn(2+) is required as a cofactor.

It is found in the cell membrane. The chain is Protease HtpX homolog from Streptococcus pneumoniae serotype 19F (strain G54).